The sequence spans 463 residues: Kynureninase 2 (463 aa).

Residues leucine 134, threonine 135, 162–165 (FPSD), aspartate 247, histidine 250, and tyrosine 272 contribute to the pyridoxal 5'-phosphate site. The residue at position 273 (lysine 273) is an N6-(pyridoxal phosphate)lysine. Residues tryptophan 312 and asparagine 340 each contribute to the pyridoxal 5'-phosphate site.

This sequence belongs to the kynureninase family. As to quaternary structure, homodimer. Pyridoxal 5'-phosphate serves as cofactor.

It is found in the cytoplasm. It carries out the reaction L-kynurenine + H2O = anthranilate + L-alanine + H(+). It catalyses the reaction 3-hydroxy-L-kynurenine + H2O = 3-hydroxyanthranilate + L-alanine + H(+). The protein operates within amino-acid degradation; L-kynurenine degradation; L-alanine and anthranilate from L-kynurenine: step 1/1. It participates in cofactor biosynthesis; NAD(+) biosynthesis; quinolinate from L-kynurenine: step 2/3. In terms of biological role, catalyzes the cleavage of L-kynurenine (L-Kyn) and L-3-hydroxykynurenine (L-3OHKyn) into anthranilic acid (AA) and 3-hydroxyanthranilic acid (3-OHAA), respectively. This Aspergillus niger (strain ATCC MYA-4892 / CBS 513.88 / FGSC A1513) protein is Kynureninase 2 (bna5-2).